A 272-amino-acid polypeptide reads, in one-letter code: Bis(5'-nucleosyl)-tetraphosphatase, symmetrical (272 aa).

This sequence belongs to the Ap4A hydrolase family.

The catalysed reaction is P(1),P(4)-bis(5'-adenosyl) tetraphosphate + H2O = 2 ADP + 2 H(+). In terms of biological role, hydrolyzes diadenosine 5',5'''-P1,P4-tetraphosphate to yield ADP. The polypeptide is Bis(5'-nucleosyl)-tetraphosphatase, symmetrical (Wigglesworthia glossinidia brevipalpis).